The sequence spans 154 residues: Myoglobin (154 aa).

In terms of domain architecture, Globin spans 2–148 (GLSDGEWQLV…FRKDMASNYK (147 aa)). The residue at position 4 (S4) is a Phosphoserine. Nitrite is bound at residue H65. An O2-binding site is contributed by H65. T68 is subject to Phosphothreonine. A heme b-binding site is contributed by H94.

This sequence belongs to the globin family. As to quaternary structure, monomeric.

It is found in the cytoplasm. It localises to the sarcoplasm. The enzyme catalyses Fe(III)-heme b-[protein] + nitric oxide + H2O = Fe(II)-heme b-[protein] + nitrite + 2 H(+). It carries out the reaction H2O2 + AH2 = A + 2 H2O. Monomeric heme protein which primary function is to store oxygen and facilitate its diffusion within muscle tissues. Reversibly binds oxygen through a pentacoordinated heme iron and enables its timely and efficient release as needed during periods of heightened demand. Depending on the oxidative conditions of tissues and cells, and in addition to its ability to bind oxygen, it also has a nitrite reductase activity whereby it regulates the production of bioactive nitric oxide. Under stress conditions, like hypoxia and anoxia, it also protects cells against reactive oxygen species thanks to its pseudoperoxidase activity. The chain is Myoglobin (MB) from Gorilla gorilla beringei (Mountain gorilla).